Consider the following 961-residue polypeptide: E4 ubiquitin-protein ligase UFD2 (961 aa).

The U-box domain maps to 880–954 (DVPDEFLDPL…LCFKKQKKEE (75 aa)).

This sequence belongs to the ubiquitin conjugation factor E4 family. Interacts with CDC48. Interacts with the ubiquitin-like domain of RAD23 and DSK2. Interacts with PEX29.

It localises to the cytoplasm. Its subcellular location is the nucleus. It carries out the reaction S-ubiquitinyl-[E2 ubiquitin-conjugating enzyme]-L-cysteine + [acceptor protein]-L-lysine = [E2 ubiquitin-conjugating enzyme]-L-cysteine + N(6)-ubiquitinyl-[acceptor protein]-L-lysine.. It functions in the pathway protein modification; protein ubiquitination. Its function is as follows. E4 ubiquitin chain-elongation enzyme specifically involved in polyubiquitin chain assembly. Binds to CDC48 and elongates mono- and diubiquitinated ERAD substrates presented by the UFD1-NPL4-CDC48/p97 (UNC) AAA ATPase complex to a chain length of 4 to 6 ubiquitin moieties. Delivers these polyubiquitinated substrates to RAD23 and DSK2, which target them to the proteasome. Has E3 ubiquitin-protein ligase activity, accepting ubiquitin from its cognate E2 ubiquitin-conjugating enzyme UBC4. Enhances ubiquitination at 'Lys-48', but not at 'Lys-29' of the Ub moiety. Promotes ubiquitin chain elongation at 'Lys-48' on the DOA10 substrate PEX29. Also involved in the proteolytic processing of the ER-bound transcription factor SPT23. The protein is E4 ubiquitin-protein ligase UFD2 (UFD2) of Saccharomyces cerevisiae (strain ATCC 204508 / S288c) (Baker's yeast).